The sequence spans 594 residues: Protein TRANSPORT INHIBITOR RESPONSE 1 (594 aa).

The F-box domain maps to 3–50 (KRIALSFPEEVLEHVFSFIQLDKDRNSVSLVCKSWYEIERWCRRKVFI). 1D-myo-inositol hexakisphosphate is bound at residue Lys74. Positions 81-82 (DF) are interaction with auxin-responsive proteins. 1D-myo-inositol hexakisphosphate contacts are provided by residues 113–114 (KR) and Arg344. An interaction with auxin-responsive proteins region spans residues 347-352 (PSEPFV). A 1D-myo-inositol hexakisphosphate-binding site is contributed by 401–403 (RFR). Arg403 serves as a coordination point for (indol-3-yl)acetate. An interaction with auxin-responsive proteins region spans residues 405-409 (CIIEP). Arg436 is a 1D-myo-inositol hexakisphosphate binding site. 438–439 (SL) contributes to the (indol-3-yl)acetate binding site. An interaction with auxin-responsive proteins region spans residues 464-465 (AF). Residues 484 to 485 (RK) and Arg509 each bind 1D-myo-inositol hexakisphosphate.

In terms of assembly, interacts with auxin. Part of a SCF E3 ubiquitin ligase complex SCF(TIR1) composed of SKP1, CUL1, RBX1 and TIR1. SCF(TIR1) interacts with the COP9 signalosome (CSN) complex. Interacts with Aux/IAA proteins (IAA3, IAA7, IAA12 and IAA17) in an auxin-dependent manner. The interaction with IAA3, a negative regulator of auxin responses, is promoted by auxin, but repressed by juglon (5-hydroxy-1,4-naphthoquinone). Interactions with auxin-responsive proteins is inactivated by auxin antagonists. As to expression, expressed in roots, stems, leaves and flowers. In adult plants, mostly expressed in floral stigma, anther filaments, abscission zones and vascular tissues.

It is found in the nucleus. It functions in the pathway protein modification; protein ubiquitination. Auxin receptor that mediates Aux/IAA proteins proteasomal degradation and auxin-regulated transcription. The SCF(TIR1) E3 ubiquitin ligase complex is involved in auxin-mediated signaling pathway that regulate root and hypocotyl growth, lateral root formation, cell elongation, and gravitropism. Appears to allow pericycle cells to overcome G2 arrest prior to lateral root development. Plays a role in ethylene signaling in roots. Confers sensitivity to the virulent bacterial pathogen P.syringae. This chain is Protein TRANSPORT INHIBITOR RESPONSE 1 (TIR1), found in Arabidopsis thaliana (Mouse-ear cress).